Here is a 478-residue protein sequence, read N- to C-terminus: ATP synthase subunit beta (478 aa).

ATP is bound at residue G164 to T171.

This sequence belongs to the ATPase alpha/beta chains family. As to quaternary structure, F-type ATPases have 2 components, CF(1) - the catalytic core - and CF(0) - the membrane proton channel. CF(1) has five subunits: alpha(3), beta(3), gamma(1), delta(1), epsilon(1). CF(0) has three main subunits: a(1), b(2) and c(9-12). The alpha and beta chains form an alternating ring which encloses part of the gamma chain. CF(1) is attached to CF(0) by a central stalk formed by the gamma and epsilon chains, while a peripheral stalk is formed by the delta and b chains.

Its subcellular location is the cell membrane. It catalyses the reaction ATP + H2O + 4 H(+)(in) = ADP + phosphate + 5 H(+)(out). Its function is as follows. Produces ATP from ADP in the presence of a proton gradient across the membrane. The catalytic sites are hosted primarily by the beta subunits. The sequence is that of ATP synthase subunit beta from Streptomyces avermitilis (strain ATCC 31267 / DSM 46492 / JCM 5070 / NBRC 14893 / NCIMB 12804 / NRRL 8165 / MA-4680).